Reading from the N-terminus, the 406-residue chain is Argininosuccinate synthase (406 aa).

ATP contacts are provided by residues 11 to 19 (AYSGGLDTS) and alanine 38. L-citrulline is bound by residues tyrosine 91 and serine 96. An ATP-binding site is contributed by glycine 121. Residues threonine 123, asparagine 127, and aspartate 128 each coordinate L-aspartate. An L-citrulline-binding site is contributed by asparagine 127. 5 residues coordinate L-citrulline: arginine 131, serine 181, serine 190, glutamate 266, and tyrosine 278.

It belongs to the argininosuccinate synthase family. Type 1 subfamily. Homotetramer.

Its subcellular location is the cytoplasm. The enzyme catalyses L-citrulline + L-aspartate + ATP = 2-(N(omega)-L-arginino)succinate + AMP + diphosphate + H(+). It participates in amino-acid biosynthesis; L-arginine biosynthesis; L-arginine from L-ornithine and carbamoyl phosphate: step 2/3. This is Argininosuccinate synthase from Campylobacter jejuni subsp. jejuni serotype O:6 (strain 81116 / NCTC 11828).